The following is a 485-amino-acid chain: Glutamyl-tRNA(Gln) amidotransferase subunit A (485 aa).

Active-site charge relay system residues include Lys78 and Ser153. Catalysis depends on Ser177, which acts as the Acyl-ester intermediate.

Belongs to the amidase family. GatA subfamily. Heterotrimer of A, B and C subunits.

It carries out the reaction L-glutamyl-tRNA(Gln) + L-glutamine + ATP + H2O = L-glutaminyl-tRNA(Gln) + L-glutamate + ADP + phosphate + H(+). In terms of biological role, allows the formation of correctly charged Gln-tRNA(Gln) through the transamidation of misacylated Glu-tRNA(Gln) in organisms which lack glutaminyl-tRNA synthetase. The reaction takes place in the presence of glutamine and ATP through an activated gamma-phospho-Glu-tRNA(Gln). This Syntrophus aciditrophicus (strain SB) protein is Glutamyl-tRNA(Gln) amidotransferase subunit A.